The primary structure comprises 126 residues: Acidic phospholipase A2 S1E6-b (126 aa).

The signal sequence occupies residues 1–3 (VEG). Cystine bridges form between Cys29–Cys119, Cys31–Cys47, Cys46–Cys98, Cys52–Cys126, Cys53–Cys91, Cys60–Cys84, and Cys78–Cys89. Positions 30, 32, and 34 each coordinate Ca(2+). Residue His50 is part of the active site. Residue Asp51 coordinates Ca(2+). The active site involves Asp92.

As to quaternary structure, homodimer. Requires Ca(2+) as cofactor. As to expression, expressed by the venom gland.

The protein resides in the secreted. The catalysed reaction is a 1,2-diacyl-sn-glycero-3-phosphocholine + H2O = a 1-acyl-sn-glycero-3-phosphocholine + a fatty acid + H(+). Functionally, snake venom phospholipase that inhibits ADP-induced platelet aggregation. PLA2 catalyzes the calcium-dependent hydrolysis of the 2-acyl groups in 3-sn-phosphoglycerides. This chain is Acidic phospholipase A2 S1E6-b, found in Calloselasma rhodostoma (Malayan pit viper).